We begin with the raw amino-acid sequence, 142 residues long: Large ribosomal subunit protein uL13 (142 aa).

This sequence belongs to the universal ribosomal protein uL13 family. Part of the 50S ribosomal subunit.

Its function is as follows. This protein is one of the early assembly proteins of the 50S ribosomal subunit, although it is not seen to bind rRNA by itself. It is important during the early stages of 50S assembly. The sequence is that of Large ribosomal subunit protein uL13 from Hahella chejuensis (strain KCTC 2396).